We begin with the raw amino-acid sequence, 101 residues long: Small ribosomal subunit protein uS14 (101 aa).

Residues 32-62 are disordered; it reads GDAKRSDAEREAARLGLQKLPRNANPTRQRN. A compositionally biased stretch (basic and acidic residues) spans 33–44; that stretch reads DAKRSDAEREAA.

The protein belongs to the universal ribosomal protein uS14 family. Part of the 30S ribosomal subunit. Contacts proteins S3 and S10.

Its function is as follows. Binds 16S rRNA, required for the assembly of 30S particles and may also be responsible for determining the conformation of the 16S rRNA at the A site. This chain is Small ribosomal subunit protein uS14, found in Verminephrobacter eiseniae (strain EF01-2).